Consider the following 265-residue polypeptide: MFHNCRMEGSCNAETTSHVTAVVRAPIFCNCFALCLEIPILWDDLLYRHEKLLFGGFTCNGGAELILNSHCCLADAQMWQVHCHCSDSLSLQCLSRTQVLKEFLEEFVMGGFVNKKYLWYREFVNSSRPDEINYVGSIMFRNIHYIYFRLSFFSTVHQACMLAIQRCISPELGVVFKSTYNYWLVLKCKSCSLQNYCALKSCAFWVRSIIDRVLREVEKIPVVLHRTTSKAEERRQTALKQAMMYGRCRHIQNLCLVNLNAFLHF.

Belongs to the adenoviridae E4 30 to 34 kDa protein family. In terms of assembly, interacts with E1B-55k.

Its subcellular location is the host nucleus. The protein resides in the host cytoplasm. Plays a major role to prevent cellular inhibition of viral genome replication by nuclear bodies. Assembles an SCF-like E3 ubiquitin ligase complex based on the cellular proteins ELOB, ELOC, CUL5 and RBX1, in cooperation with viral E1B-55K. This viral RING-type ligase ubiquitinates cellular substrates prior to proteasomal degradation: p53/TP53, LIG4, MRE11-RAD50-NBS1 (MRN) complex, ITGA3, DAXX and BLM. The protein is Early E4 31 kDa protein of Canis lupus familiaris (Dog).